Reading from the N-terminus, the 1336-residue chain is MRGAGGPRGPRGPAKMLLLLALACASPFPEEAPGPGGAGGPGGGLGGARPLNVALVFSGPAYAAEAARLGPAVAAAVRSPGLDVRPVALVLNGSDPRSLVLQLCDLLSGLRVHGVVFEDDSRAPAVAPILDFLSAQTSLPIVAVHGGAALVLTPKEKGSTFLQLGSSTEQQLQVIFEVLEEYDWTSFVAVTTRAPGHRAFLSYIEVLTDGSLVGWEHRGALTLDPGAGEAVLSAQLRSVSAQIRLLFCAREEAEPVFRAAEEAGLTGSGYVWFMVGPQLAGGGGSGAPGEPPLLPGGAPLPAGLFAVRSAGWRDDLARRVAAGVAVVARGAQALLRDYGFLPELGHDCRAQNRTHRGESLHRYFMNITWDNRDYSFNEDGFLVNPSLVVISLTRDRTWEVVGSWEQQTLRLKYPLWSRYGRFLQPVDDTQHLTVATLEERPFVIVEPADPISGTCIRDSVPCRSQLNRTHSPPPDAPRPEKRCCKGFCIDILKRLAHTIGFSYDLYLVTNGKHGKKIDGVWNGMIGEVFYQRADMAIGSLTINEERSEIVDFSVPFVETGISVMVARSNGTVSPSAFLEPYSPAVWVMMFVMCLTVVAVTVFIFEYLSPVGYNRSLATGKRPGGSTFTIGKSIWLLWALVFNNSVPVENPRGTTSKIMVLVWAFFAVIFLASYTANLAAFMIQEEYVDTVSGLSDRKFQRPQEQYPPLKFGTVPNGSTEKNIRSNYPDMHSYMVRYNQPRVEEALTQLKAGKLDAFIYDAAVLNYMARKDEGCKLVTIGSGKVFATTGYGIALHKGSRWKRPIDLALLQFLGDDEIEMLERLWLSGICHNDKIEVMSSKLDIDNMAGVFYMLLVAMGLSLLVFAWEHLVYWRLRHCLGPTHRMDFLLAFSRGMYSCCSAEAAPPPAKPPPPPQPLPSPAYPAPRPAPGPAPFVPRERASVDRWRRTKGAGPPGGAGLADGFHRYYGPIEPQGLGLGLGEARAAPRGAAGRPLSPPAAQPPQKPPPSYFAIVRDKEPAEPPAGAFPGFPSPPAPPAAAATAVGPPLCRLAFEDESPPAPARWPRSDPESQPLLGPGAGGAGGTGGAGGGAPAAPPPCRAAPPPCPYLDLEPSPSDSEDSESLGGASLGGLEPWWFADFPYPYAERLGPPPGRYWSVDKLGGWRAGSWDYLPPRSGPAAWHCRHCASLELLPPPRHLSCSHDGLDGGWWAPPPPPWAAGPLPRRRARCGCPRSHPHRPRASHRTPAAAAPHHHRHRRAAGGWDLPPPAPTSRSLEDLSSCPRAAPARRLTGPSRHARRCPHAAHWGPPLPTASHRRHRGGDLGTRRGSAHFSSLESEV.

The signal sequence occupies residues 1 to 27 (MRGAGGPRGPRGPAKMLLLLALACASP). Residues 28–582 (FPEEAPGPGG…SPSAFLEPYS (555 aa)) are Extracellular-facing. Asparagine 92 carries an N-linked (GlcNAc...) asparagine glycan. An intrachain disulfide couples cysteine 104 to cysteine 348. N-linked (GlcNAc...) asparagine glycans are attached at residues asparagine 352, asparagine 366, asparagine 384, and asparagine 467. 2 cysteine pairs are disulfide-bonded: cysteine 455–cysteine 483 and cysteine 462–cysteine 484. Serine 539, threonine 541, and arginine 546 together coordinate L-glutamate. A glycan (N-linked (GlcNAc...) asparagine) is linked at asparagine 569. A helical transmembrane segment spans residues 583–604 (PAVWVMMFVMCLTVVAVTVFIF). At 605-629 (EYLSPVGYNRSLATGKRPGGSTFTI) the chain is on the cytoplasmic side. Positions 630-641 (GKSIWLLWALVF) form an intramembrane region, discontinuously helical. Residues 631–650 (KSIWLLWALVFNNSVPVENP) are pore-forming. At 642–653 (NNSVPVENPRGT) the chain is on the cytoplasmic side. Residues 654–674 (TSKIMVLVWAFFAVIFLASYT) traverse the membrane as a helical segment. The Extracellular portion of the chain corresponds to 675–843 (ANLAAFMIQE…EVMSSKLDID (169 aa)). 3 residues coordinate L-glutamate: serine 717, threonine 718, and aspartate 759. A disulfide bridge connects residues cysteine 773 and cysteine 828. The helical transmembrane segment at 844-867 (NMAGVFYMLLVAMGLSLLVFAWEH) threads the bilayer. The Cytoplasmic portion of the chain corresponds to 868–1336 (LVYWRLRHCL…AHFSSLESEV (469 aa)). 3 disordered regions span residues 900-934 (EAAPPPAKPPPPPQPLPSPAYPAPRPAPGPAPFVP), 981-1123 (RAAP…SLGG), and 1225-1336 (RCGC…ESEV). The span at 902–932 (APPPAKPPPPPQPLPSPAYPAPRPAPGPAPF) shows a compositional bias: pro residues. Residues 981–991 (RAAPRGAAGRP) show a composition bias toward low complexity. Positions 992–1006 (LSPPAAQPPQKPPPS) are enriched in pro residues. The span at 1035–1044 (AAAATAVGPP) shows a compositional bias: low complexity. Residues 1074 to 1089 (PGAGGAGGTGGAGGGA) are compositionally biased toward gly residues. The segment covering 1091-1104 (AAPPPCRAAPPPCP) has biased composition (pro residues). Positions 1225-1240 (RCGCPRSHPHRPRASH) are enriched in basic residues. Position 1316 is an omega-N-methylarginine (arginine 1316). Serine 1326 is modified (phosphoserine). Residues 1334 to 1336 (SEV) carry the PDZ-binding motif.

The protein belongs to the glutamate-gated ion channel (TC 1.A.10.1) family. NR2D/GRIN2D subfamily. As to quaternary structure, heterotetramer. Forms heterotetrameric channels composed of two GluN1/zeta subunits (GRIN1), and two identical GluN2/epsilon subunits (GRIN2A, GRIN2B, GRIN2C or GRIN2D) or GluN3 subunits (GRIN3A or GRIN3B) (in vitro). In vivo, the subunit composition may depend on the expression levels of the different subunits. Interacts with PDZ domains of PATJ and DLG4.

The protein localises to the cell membrane. It is found in the postsynaptic cell membrane. It carries out the reaction Ca(2+)(in) = Ca(2+)(out). The enzyme catalyses Na(+)(in) = Na(+)(out). It catalyses the reaction K(+)(in) = K(+)(out). Component of N-methyl-D-aspartate (NMDA) receptors (NMDARs) that function as heterotetrameric, ligand-gated cation channels with high calcium permeability and voltage-dependent block by Mg(2+). Participates in synaptic plasticity for learning and memory formation. Channel activation requires binding of the neurotransmitter L-glutamate to the GluN2 subunit, glycine or D-serine binding to the GluN1 subunit, plus membrane depolarization to eliminate channel inhibition by Mg(2+). NMDARs mediate simultaneously the potasium efflux and the influx of calcium and sodium. Each GluN2 subunit confers differential attributes to channel properties, including activation, deactivation and desensitization kinetics, pH sensitivity, Ca2(+) permeability, and binding to allosteric modulators. This chain is Glutamate receptor ionotropic, NMDA 2D, found in Homo sapiens (Human).